A 150-amino-acid polypeptide reads, in one-letter code: Large ribosomal subunit protein uL13 (150 aa).

It belongs to the universal ribosomal protein uL13 family. In terms of assembly, part of the 50S ribosomal subunit.

Its function is as follows. This protein is one of the early assembly proteins of the 50S ribosomal subunit, although it is not seen to bind rRNA by itself. It is important during the early stages of 50S assembly. The protein is Large ribosomal subunit protein uL13 of Chlorobaculum parvum (strain DSM 263 / NCIMB 8327) (Chlorobium vibrioforme subsp. thiosulfatophilum).